The following is a 101-amino-acid chain: Large ribosomal subunit protein eL31 (101 aa).

The protein belongs to the eukaryotic ribosomal protein eL31 family.

This Ignicoccus hospitalis (strain KIN4/I / DSM 18386 / JCM 14125) protein is Large ribosomal subunit protein eL31.